The primary structure comprises 230 residues: Urease accessory protein UreF (230 aa).

It belongs to the UreF family. In terms of assembly, ureD, UreF and UreG form a complex that acts as a GTP-hydrolysis-dependent molecular chaperone, activating the urease apoprotein by helping to assemble the nickel containing metallocenter of UreC. The UreE protein probably delivers the nickel.

It localises to the cytoplasm. In terms of biological role, required for maturation of urease via the functional incorporation of the urease nickel metallocenter. This Cupriavidus taiwanensis (strain DSM 17343 / BCRC 17206 / CCUG 44338 / CIP 107171 / LMG 19424 / R1) (Ralstonia taiwanensis (strain LMG 19424)) protein is Urease accessory protein UreF.